Reading from the N-terminus, the 90-residue chain is Large ribosomal subunit protein bL27 (90 aa).

Residues 1 to 21 (MASKKAGGSTRNGRDSEAKRL) are disordered.

It belongs to the bacterial ribosomal protein bL27 family.

The protein is Large ribosomal subunit protein bL27 of Neisseria meningitidis serogroup C (strain 053442).